We begin with the raw amino-acid sequence, 1241 residues long: ATP-dependent helicase/nuclease subunit A (1241 aa).

The UvrD-like helicase ATP-binding domain occupies serine 12–arginine 485. Alanine 33 to threonine 40 serves as a coordination point for ATP. Residues glycine 505–glycine 805 enclose the UvrD-like helicase C-terminal domain.

Belongs to the helicase family. AddA subfamily. As to quaternary structure, heterodimer of AddA and AddB/RexB. It depends on Mg(2+) as a cofactor.

The catalysed reaction is Couples ATP hydrolysis with the unwinding of duplex DNA by translocating in the 3'-5' direction.. It catalyses the reaction ATP + H2O = ADP + phosphate + H(+). The heterodimer acts as both an ATP-dependent DNA helicase and an ATP-dependent, dual-direction single-stranded exonuclease. Recognizes the chi site generating a DNA molecule suitable for the initiation of homologous recombination. The AddA nuclease domain is required for chi fragment generation; this subunit has the helicase and 3' -&gt; 5' nuclease activities. The polypeptide is ATP-dependent helicase/nuclease subunit A (Bacillus anthracis).